Consider the following 172-residue polypeptide: NAD(P)H-quinone oxidoreductase subunit I, chloroplastic (172 aa).

4Fe-4S ferredoxin-type domains follow at residues 55 to 84 (GRIH…VDWK) and 95 to 124 (LNYS…MTEE). Residues Cys64, Cys67, Cys70, Cys74, Cys104, Cys107, Cys110, and Cys114 each coordinate [4Fe-4S] cluster.

It belongs to the complex I 23 kDa subunit family. In terms of assembly, NDH is composed of at least 16 different subunits, 5 of which are encoded in the nucleus. Requires [4Fe-4S] cluster as cofactor.

The protein resides in the plastid. It localises to the chloroplast thylakoid membrane. The enzyme catalyses a plastoquinone + NADH + (n+1) H(+)(in) = a plastoquinol + NAD(+) + n H(+)(out). It catalyses the reaction a plastoquinone + NADPH + (n+1) H(+)(in) = a plastoquinol + NADP(+) + n H(+)(out). Its function is as follows. NDH shuttles electrons from NAD(P)H:plastoquinone, via FMN and iron-sulfur (Fe-S) centers, to quinones in the photosynthetic chain and possibly in a chloroplast respiratory chain. The immediate electron acceptor for the enzyme in this species is believed to be plastoquinone. Couples the redox reaction to proton translocation, and thus conserves the redox energy in a proton gradient. The polypeptide is NAD(P)H-quinone oxidoreductase subunit I, chloroplastic (Capsella bursa-pastoris (Shepherd's purse)).